Here is a 259-residue protein sequence, read N- to C-terminus: Ubiquitin-conjugating enzyme E2 J2 (259 aa).

At 1 to 226 the chain is on the cytoplasmic side; sequence MSSNSVKRAP…AGLQQANRHH (226 aa). The UBC core domain occupies 12 to 162; it reads TATQRLKQDY…DKVFCELFPE (151 aa). Residue Cys-94 is the Glycyl thioester intermediate of the active site. The tract at residues 174-200 is disordered; it reads QDELSSRPQALPLPDVVPDGETHHGQH. A helical; Anchor for type IV membrane protein membrane pass occupies residues 227–247; that stretch reads GLLGGALANLFVIVGFAAFAY. Residues 248 to 259 are Lumenal-facing; sequence TVKYVLRSIAQE.

This sequence belongs to the ubiquitin-conjugating enzyme family.

The protein localises to the endoplasmic reticulum membrane. The enzyme catalyses S-ubiquitinyl-[E1 ubiquitin-activating enzyme]-L-cysteine + [E2 ubiquitin-conjugating enzyme]-L-cysteine = [E1 ubiquitin-activating enzyme]-L-cysteine + S-ubiquitinyl-[E2 ubiquitin-conjugating enzyme]-L-cysteine.. The protein operates within protein modification; protein ubiquitination. Functionally, catalyzes the covalent attachment of ubiquitin to other proteins. Seems to function in the selective degradation of misfolded membrane proteins from the endoplasmic reticulum (ERAD). In cooperation with the GATOR2 complex, catalyzes 'Lys-6'-linked ubiquitination of NPRL2. This is Ubiquitin-conjugating enzyme E2 J2 (UBE2J2) from Bos taurus (Bovine).